Consider the following 112-residue polypeptide: MKKVEAIIRPFKLDEVKIALVNAGIVGMTVSEVRGFGRQKGQTERYRGSEYTVEFLQKLKVEIVVEDNQVDMVVDKIIAAARTGEIGDGKIFISPVEQVVRIRTGEKNTEAV.

The residue at position 49 (S49) is a Phosphoserine. Y51 bears the O-UMP-tyrosine mark.

The protein belongs to the P(II) protein family. As to quaternary structure, homotrimer. Post-translationally, phosphorylation dependent on the nitrogen source and spectral light quality.

P-II indirectly controls the transcription of the GS gene (glnA). P-II prevents NR-II-catalyzed conversion of NR-I to NR-I-phosphate, the transcriptional activator of glnA. When P-II is phosphorylated, these events are reversed. In nitrogen-limiting conditions, when the ratio of Gln to 2-ketoglutarate decreases, P-II is phosphorylated which allows the deadenylation of glutamine synthetase (GS), thus activating the enzyme. This chain is Nitrogen regulatory protein P-II (glnB), found in Microchaete diplosiphon (Fremyella diplosiphon).